Here is a 222-residue protein sequence, read N- to C-terminus: Putative N-acetylmannosamine-6-phosphate 2-epimerase (222 aa).

The protein belongs to the NanE family.

It catalyses the reaction an N-acyl-D-glucosamine 6-phosphate = an N-acyl-D-mannosamine 6-phosphate. The protein operates within amino-sugar metabolism; N-acetylneuraminate degradation; D-fructose 6-phosphate from N-acetylneuraminate: step 3/5. In terms of biological role, converts N-acetylmannosamine-6-phosphate (ManNAc-6-P) to N-acetylglucosamine-6-phosphate (GlcNAc-6-P). The protein is Putative N-acetylmannosamine-6-phosphate 2-epimerase of Oceanobacillus iheyensis (strain DSM 14371 / CIP 107618 / JCM 11309 / KCTC 3954 / HTE831).